The sequence spans 342 residues: Antihemorrhagic factor HSF (342 aa).

A signal peptide spans 1 to 19; that stretch reads MNSLVALVLLGQIIGSTLS. Cystatin fetuin-A-type domains follow at residues 22–130 and 141–254; these read VRGD…VKCH and RNCS…SNCV. The Cell attachment site signature appears at 23 to 25; sequence RGD. Residues 24-108 are indispensable for metalloproteinase inhibition; that stretch reads GDLECDDKEA…RQQHNHAVEM (85 aa). 6 cysteine pairs are disulfide-bonded: C28–C332, C85–C96, C110–C129, C143–C146, C205–C217, and C230–C253. N142 carries an N-linked (GlcNAc...) asparagine glycan. N-linked (GlcNAc...) asparagine glycosylation occurs at N204. N-linked (GlcNAc...) asparagine glycosylation occurs at N282.

Belongs to the fetuin family. Post-translationally, cys-63 may exist in a mixed disulfide form with a thiol compound such as glutathione. Expressed by the liver.

The protein resides in the secreted. Its function is as follows. Inhibits hemorrhagic and proteolytic activities of metalloproteinases (HR1A, HR1B, HR2a, HR2b and H2 proteinase from T.flavodidis and brevilysins H3, H4, H6 and L4 from A.halys brevicaudus). Has no effect on brevilysins H2. Has no effect on papain and cathepsin-B. The protein is Antihemorrhagic factor HSF of Protobothrops flavoviridis (Habu).